We begin with the raw amino-acid sequence, 345 residues long: Methylthioribose-1-phosphate isomerase (345 aa).

Residues 47–49, Arg-90, and Gln-197 contribute to the substrate site; that span reads RGA. Residue Asp-238 is the Proton donor of the active site. 248–249 contacts substrate; the sequence is NK.

It belongs to the eIF-2B alpha/beta/delta subunits family. MtnA subfamily.

The catalysed reaction is 5-(methylsulfanyl)-alpha-D-ribose 1-phosphate = 5-(methylsulfanyl)-D-ribulose 1-phosphate. It functions in the pathway amino-acid biosynthesis; L-methionine biosynthesis via salvage pathway; L-methionine from S-methyl-5-thio-alpha-D-ribose 1-phosphate: step 1/6. Its function is as follows. Catalyzes the interconversion of methylthioribose-1-phosphate (MTR-1-P) into methylthioribulose-1-phosphate (MTRu-1-P). This chain is Methylthioribose-1-phosphate isomerase, found in Caldanaerobacter subterraneus subsp. tengcongensis (strain DSM 15242 / JCM 11007 / NBRC 100824 / MB4) (Thermoanaerobacter tengcongensis).